The primary structure comprises 424 residues: Hemagglutinin-esterase (424 aa).

A signal peptide spans 1–16; that stretch reads MFLLPRFVLVSCIIGS. Residues 7–127 are esterase domain 1; that stretch reads FVLVSCIIGS…SNDIWMQNKG (121 aa). Over 17 to 392 the chain is Virion surface; that stretch reads LGFDNPPTNV…PICVYDPLPI (376 aa). The active-site Nucleophile is S40. A disulfide bridge connects residues C44 and C65. N54, N89, N153, N236, and N301 each carry an N-linked (GlcNAc...) asparagine; by host glycan. 3 disulfide bridges follow: C113/C162, C197/C276, and C205/C249. A receptor binding region spans residues 128–266; the sequence is LFYTQVYKNM…GNYLAISNEL (139 aa). The interval 267-379 is esterase domain 2; it reads LLTVPTKAIC…RCPTAADINT (113 aa). C307 and C312 form a disulfide bridge. Residue N316 is glycosylated (N-linked (GlcNAc...) asparagine; by host). Residues D326 and H329 each act as charge relay system in the active site. C347 and C371 are oxidised to a cystine. N-linked (GlcNAc...) asparagine; by host glycosylation occurs at N358. The chain crosses the membrane as a helical span at residues 393–413; that stretch reads ILLGILLSVAVIIIVVLLLYF. The Intravirion portion of the chain corresponds to 414–424; sequence MVDNGTRLHDA. N417 carries an N-linked (GlcNAc...) asparagine; by host glycan.

The protein belongs to the influenza type C/coronaviruses hemagglutinin-esterase family. Homodimer; disulfide-linked. Forms a complex with the M protein in the pre-Golgi. Associates then with S-M complex to form a ternary complex S-M-HE. In terms of processing, N-glycosylated in the host RER.

It localises to the virion membrane. The protein resides in the host cell membrane. The enzyme catalyses N-acetyl-9-O-acetylneuraminate + H2O = N-acetylneuraminate + acetate + H(+). It catalyses the reaction N-acetyl-4-O-acetylneuraminate + H2O = N-acetylneuraminate + acetate + H(+). Functionally, structural protein that makes short spikes at the surface of the virus. Contains receptor binding and receptor-destroying activities. Mediates de-O-acetylation of N-acetyl-4-O-acetylneuraminic acid, which is probably the receptor determinant recognized by the virus on the surface of erythrocytes and susceptible cells. This receptor-destroying activity is important for virus release as it probably helps preventing self-aggregation and ensures the efficient spread of the progeny virus from cell to cell. May serve as a secondary viral attachment protein for initiating infection, the spike protein being the major one. May become a target for both the humoral and the cellular branches of the immune system. The chain is Hemagglutinin-esterase from Bos taurus (Bovine).